We begin with the raw amino-acid sequence, 767 residues long: Syn-copalyl diphosphate synthase, chloroplastic (767 aa).

The transit peptide at 1 to 47 (MPVFTASFQCVTLFGQPASAADAQPLLQGQRPFLHLHARRRRPCGPM) directs the protein to the chloroplast. A disordered region spans residues 45–74 (GPMLISKSPPYPASEETREWEADGQHEHTD). Residues 59 to 74 (EETREWEADGQHEHTD) show a composition bias toward basic and acidic residues. Substrate is bound at residue lysine 233. Mg(2+) contacts are provided by aspartate 365 and aspartate 367. Positions 365 to 368 (DIDD) match the DXDD motif motif. Position 453 (lysine 453) interacts with substrate.

It belongs to the terpene synthase family. The cofactor is Mg(2+).

It localises to the plastid. Its subcellular location is the chloroplast. It catalyses the reaction (2E,6E,10E)-geranylgeranyl diphosphate = 9alpha-copalyl diphosphate. Its function is as follows. Catalyzes the conversion of geranylgeranyl diphosphate to the phytoalexin precursor syn-copalyl diphosphate. Required for the biosynthesis of momilactones that exude from roots and act as allelochemicals against lowland weeds in paddy soil. The protein is Syn-copalyl diphosphate synthase, chloroplastic of Oryza sativa subsp. japonica (Rice).